The primary structure comprises 638 residues: Zinc finger protein 143 (638 aa).

N-acetylmethionine is present on methionine 1. A Glycyl lysine isopeptide (Lys-Gly) (interchain with G-Cter in SUMO2) cross-link involves residue lysine 213. 4 C2H2-type zinc fingers span residues phenylalanine 237–histidine 261, tyrosine 267–histidine 291, tyrosine 297–histidine 321, and phenylalanine 327–histidine 351. Residue threonine 352 is modified to Phosphothreonine. 3 consecutive C2H2-type zinc fingers follow at residues tyrosine 357–histidine 381, tyrosine 387–histidine 411, and tyrosine 417–histidine 440. Residue lysine 406 forms a Glycyl lysine isopeptide (Lys-Gly) (interchain with G-Cter in SUMO2) linkage.

Belongs to the GLI C2H2-type zinc-finger protein family. As to quaternary structure, interacts with CHD8. Forms a complex with HCFC1 and ZNF143. In terms of tissue distribution, expressed in all tissues tested, with the strongest expression in ovary.

The protein resides in the nucleus. Its function is as follows. Transcriptional activator. Activates the gene for selenocysteine tRNA (tRNAsec). Binds to the SPH motif of small nuclear RNA (snRNA) gene promoters. Participates in efficient U6 RNA polymerase III transcription via its interaction with CHD8. In complex with HCFC1 and ZNF143, regulates the expression of several genes, including AP2S1, ESCO2, OPHN1, RBL1, UBXN8 and ZNF32. The sequence is that of Zinc finger protein 143 (ZNF143) from Homo sapiens (Human).